Consider the following 414-residue polypeptide: tRNA(Ile)-lysidine synthase (414 aa).

17 to 22 (SGGCDS) contributes to the ATP binding site.

This sequence belongs to the tRNA(Ile)-lysidine synthase family.

It localises to the cytoplasm. It catalyses the reaction cytidine(34) in tRNA(Ile2) + L-lysine + ATP = lysidine(34) in tRNA(Ile2) + AMP + diphosphate + H(+). Its function is as follows. Ligates lysine onto the cytidine present at position 34 of the AUA codon-specific tRNA(Ile) that contains the anticodon CAU, in an ATP-dependent manner. Cytidine is converted to lysidine, thus changing the amino acid specificity of the tRNA from methionine to isoleucine. This chain is tRNA(Ile)-lysidine synthase, found in Exiguobacterium sibiricum (strain DSM 17290 / CCUG 55495 / CIP 109462 / JCM 13490 / 255-15).